A 306-amino-acid polypeptide reads, in one-letter code: Sulfate adenylyltransferase subunit 2 (306 aa).

Belongs to the PAPS reductase family. CysD subfamily. Heterodimer composed of CysD, the smaller subunit, and CysN.

The enzyme catalyses sulfate + ATP + H(+) = adenosine 5'-phosphosulfate + diphosphate. It functions in the pathway sulfur metabolism; hydrogen sulfide biosynthesis; sulfite from sulfate: step 1/3. With CysN forms the ATP sulfurylase (ATPS) that catalyzes the adenylation of sulfate producing adenosine 5'-phosphosulfate (APS) and diphosphate, the first enzymatic step in sulfur assimilation pathway. APS synthesis involves the formation of a high-energy phosphoric-sulfuric acid anhydride bond driven by GTP hydrolysis by CysN coupled to ATP hydrolysis by CysD. This is Sulfate adenylyltransferase subunit 2 from Brucella anthropi (strain ATCC 49188 / DSM 6882 / CCUG 24695 / JCM 21032 / LMG 3331 / NBRC 15819 / NCTC 12168 / Alc 37) (Ochrobactrum anthropi).